A 295-amino-acid polypeptide reads, in one-letter code: uncharacterized protein (295 aa).

NAD(+) contacts are provided by residues 11–25 and threonine 101; that span reads GYIG…MAKR. Lysine 176 is a catalytic residue. Lysine 252 is an NAD(+) binding site.

This sequence belongs to the HIBADH-related family.

This is an uncharacterized protein from Mycobacterium tuberculosis (strain CDC 1551 / Oshkosh).